Here is a 467-residue protein sequence, read N- to C-terminus: Glutamate--tRNA ligase (467 aa).

Positions 13–23 match the 'HIGH' region motif; that stretch reads PSPTGFLHLGG. Residues 118–133 are compositionally biased toward basic and acidic residues; it reads ARGDKPRYDGTWRPEP. A disordered region spans residues 118-141; the sequence is ARGDKPRYDGTWRPEPGKTLPAIP. The 'KMSKS' region signature appears at 245–249; that stretch reads KLSKR. Position 248 (Lys-248) interacts with ATP.

The protein belongs to the class-I aminoacyl-tRNA synthetase family. Glutamate--tRNA ligase type 1 subfamily. As to quaternary structure, monomer.

The protein localises to the cytoplasm. The catalysed reaction is tRNA(Glu) + L-glutamate + ATP = L-glutamyl-tRNA(Glu) + AMP + diphosphate. Functionally, catalyzes the attachment of glutamate to tRNA(Glu) in a two-step reaction: glutamate is first activated by ATP to form Glu-AMP and then transferred to the acceptor end of tRNA(Glu). In Bordetella avium (strain 197N), this protein is Glutamate--tRNA ligase.